We begin with the raw amino-acid sequence, 185 residues long: Ribosome-recycling factor (185 aa).

It belongs to the RRF family.

Its subcellular location is the cytoplasm. Responsible for the release of ribosomes from messenger RNA at the termination of protein biosynthesis. May increase the efficiency of translation by recycling ribosomes from one round of translation to another. In Hydrogenovibrio crunogenus (strain DSM 25203 / XCL-2) (Thiomicrospira crunogena), this protein is Ribosome-recycling factor.